Here is a 317-residue protein sequence, read N- to C-terminus: Melanocyte-stimulating hormone receptor (317 aa).

Residues 1–37 (MPVQGSQRRLLGSLNSTPTATPHLGLAANQTGARCLE) are Extracellular-facing. N29 carries N-linked (GlcNAc...) asparagine glycosylation. A helical membrane pass occupies residues 38–63 (VSVPDGLFLSLGLVSLVENVLVVTAI). At 64-72 (AKNRNLHSP) the chain is on the cytoplasmic side. The helical transmembrane segment at 73–93 (MYCFICCLALSDLLVSGSNML) threads the bilayer. The Extracellular segment spans residues 94-118 (ETAVTLLLEAGVLAARAAVVQQLDN). A helical membrane pass occupies residues 119 to 140 (VIDVITCSSMLSSLCFLGAIAV). The Cytoplasmic portion of the chain corresponds to 141-163 (DRYISIFYALRYHSIVTLPRARR). Residues 164-183 (AVAAIWVASVLFSTLFIAYY) form a helical membrane-spanning segment. Residues 184 to 191 (DHAAVLLC) lie on the Extracellular side of the membrane. Residues 192–211 (LVIFFLAMLVLMAVLYVHML) form a helical membrane-spanning segment. Topologically, residues 212-240 (ARACQHAQGIARLHKRQRLAHQGFGLKGA) are cytoplasmic. Residues 241–266 (ATLTILLGIFFLCWGPFFLHLTLIVL) traverse the membrane as a helical segment. Residues 267 to 279 (CPQHPTCSCIFKN) are Extracellular-facing. A helical transmembrane segment spans residues 280–300 (FNLFLALIICNAIIDPLIYAF). At 301–317 (RSQELRRTLKEVLLCSW) the chain is on the cytoplasmic side. Residue C315 is the site of S-palmitoyl cysteine attachment.

It belongs to the G-protein coupled receptor 1 family. In terms of assembly, interacts with MGRN1, but does not undergo MGRN1-mediated ubiquitination; this interaction competes with GNAS-binding and thus inhibits agonist-induced cAMP production. Interacts with OPN3; the interaction results in a decrease in MC1R-mediated cAMP signaling and ultimately a decrease in melanin production in melanocytes.

Its subcellular location is the cell membrane. Functionally, receptor for MSH (alpha, beta and gamma) and ACTH. The activity of this receptor is mediated by G proteins which activate adenylate cyclase. Mediates melanogenesis, the production of eumelanin (black/brown) and phaeomelanin (red/yellow), via regulation of cAMP signaling in melanocytes. The sequence is that of Melanocyte-stimulating hormone receptor (MC1R) from Papio anubis (Olive baboon).